The chain runs to 580 residues: Kelch-like protein 38 (580 aa).

Positions 34–101 (TDVSICSGAC…VYTGEVHISA (68 aa)) constitute a BTB domain. One can recognise a BACK domain in the interval 136-237 (CLGLVRLAEI…HPAFFHHFIA (102 aa)). 6 Kelch repeats span residues 284–331 (FLLL…TLHR), 333–382 (VYVL…THRN), 383–430 (FIFS…VKDQ), 432–478 (LYLF…VLGE), 479–520 (KIII…VMGN), and 522–572 (LYVT…TLQC).

The sequence is that of Kelch-like protein 38 (Klhl38) from Rattus norvegicus (Rat).